We begin with the raw amino-acid sequence, 384 residues long: MPNASRVVIVAGEESGDHHAAELVKQLKAVYPDLEISGIGGKHLRAAGVHLISDLTRYAVTGLTEIIPFLKIFRKAFQDIKQHLSTQKPDLLILVDYPAFNLRLAKYAKKKLGIKIIYYISPQIWAWKGKRIHLIKDCIDKMAVIFPFEKTIYENAGVPVSFVGHPLVKKIAAAKDKHSGRTSLGLPLNEPIIALLPGSRHSEIERHIPILVNTAKLLTLDNPKLRFVVPIAGTINPDKVKAYFSNQNLTVTFIQGQAIECMSAADFVIVASGTASLECALLEKPMCIIYKSSFLTYVAAMYFIKVKFLGLCNLLANKMMVPEFLQYDCNAIELSRYISNFHNDPNQAKSMINQLAKLKESLSSSQADCSLFDLVVAELPEKNA.

Belongs to the LpxB family.

It carries out the reaction a lipid X + a UDP-2-N,3-O-bis[(3R)-3-hydroxyacyl]-alpha-D-glucosamine = a lipid A disaccharide + UDP + H(+). It functions in the pathway bacterial outer membrane biogenesis; LPS lipid A biosynthesis. Condensation of UDP-2,3-diacylglucosamine and 2,3-diacylglucosamine-1-phosphate to form lipid A disaccharide, a precursor of lipid A, a phosphorylated glycolipid that anchors the lipopolysaccharide to the outer membrane of the cell. This is Lipid-A-disaccharide synthase 1 from Legionella pneumophila subsp. pneumophila (strain Philadelphia 1 / ATCC 33152 / DSM 7513).